The chain runs to 105 residues: uncharacterized protein (105 aa).

This sequence belongs to the asfivirus C122R family.

The protein localises to the virion. This is an uncharacterized protein from African swine fever virus (strain Badajoz 1971 Vero-adapted) (Ba71V).